The sequence spans 98 residues: NADH-ubiquinone oxidoreductase chain 4L (98 aa).

Helical transmembrane passes span 2-22, 29-49, and 61-81; these read PSISTNIILAFITALLGMLIF, SLLCLEGMMLSMFILSTLTIL, and ILLLVFAACEAAVGLALLVTV.

The protein belongs to the complex I subunit 4L family. Core subunit of respiratory chain NADH dehydrogenase (Complex I) which is composed of 45 different subunits.

It localises to the mitochondrion inner membrane. It carries out the reaction a ubiquinone + NADH + 5 H(+)(in) = a ubiquinol + NAD(+) + 4 H(+)(out). In terms of biological role, core subunit of the mitochondrial membrane respiratory chain NADH dehydrogenase (Complex I) which catalyzes electron transfer from NADH through the respiratory chain, using ubiquinone as an electron acceptor. Part of the enzyme membrane arm which is embedded in the lipid bilayer and involved in proton translocation. The polypeptide is NADH-ubiquinone oxidoreductase chain 4L (MT-ND4L) (Lemur catta (Ring-tailed lemur)).